The primary structure comprises 230 residues: V-type proton ATPase subunit E (230 aa).

The protein belongs to the V-ATPase E subunit family. In terms of assembly, V-ATPase is a heteromultimeric enzyme composed of a peripheral catalytic V1 complex (components A to H) attached to an integral membrane V0 proton pore complex (components: a, c, c', c'' and d).

In terms of biological role, subunit of the peripheral V1 complex of vacuolar ATPase essential for assembly or catalytic function. V-ATPase is responsible for acidifying a variety of intracellular compartments in eukaryotic cells. The polypeptide is V-type proton ATPase subunit E (VATE) (Citrus unshiu (Satsuma mandarin)).